We begin with the raw amino-acid sequence, 257 residues long: NH(3)-dependent NAD(+) synthetase (257 aa).

28–35 (GISGGVDS) is a binding site for ATP. Asp34 lines the Mg(2+) pocket. Residue Arg109 participates in deamido-NAD(+) binding. An ATP-binding site is contributed by Thr129. A Mg(2+)-binding site is contributed by Glu134. Deamido-NAD(+) contacts are provided by Lys142 and Asp149. Lys158 and Ser180 together coordinate ATP. Position 240–241 (240–241 (HK)) interacts with deamido-NAD(+).

Belongs to the NAD synthetase family. Homodimer.

It catalyses the reaction deamido-NAD(+) + NH4(+) + ATP = AMP + diphosphate + NAD(+) + H(+). It functions in the pathway cofactor biosynthesis; NAD(+) biosynthesis; NAD(+) from deamido-NAD(+) (ammonia route): step 1/1. Its function is as follows. Catalyzes the ATP-dependent amidation of deamido-NAD to form NAD. Uses ammonia as a nitrogen source. This chain is NH(3)-dependent NAD(+) synthetase, found in Pyrococcus furiosus (strain ATCC 43587 / DSM 3638 / JCM 8422 / Vc1).